The primary structure comprises 1202 residues: Liprin-alpha-1 (1202 aa).

Residues 1–33 (MMCEVMPTISEAEGPPGGGGGHGSGSPSQPDAD) are disordered. Over residues 15 to 24 (PPGGGGGHGS) the composition is skewed to gly residues. Residues 34 to 141 (SHFEQLMVSM…VSRHERSLRM (108 aa)) adopt a coiled-coil conformation. Serine 150 carries the phosphoserine modification. Positions 176–214 (EKVRERLRVALERCSLLEEELGATHKELMILKEQNNQKK) form a coiled coil. Disordered stretches follow at residues 224–245 (NHEQENTPSTSGKRSSDGSLSH) and 426–446 (KNQELQRARQREKMNEEHNKR). Threonine 230 is modified (phosphothreonine). A phosphoserine mark is found at serine 239, serine 242, and serine 244. Coiled-coil stretches lie at residues 249 to 521 (LAKV…GASL) and 623 to 669 (ADAH…SGSL). Serine 448 is subject to Phosphoserine. Basic and acidic residues predominate over residues 651 to 662 (ENTEQRAEEIES). The tract at residues 651-855 (ENTEQRAEEI…SKLGGQAEKN (205 aa)) is disordered. 3 positions are modified to phosphoserine: serine 666, serine 668, and serine 693. Over residues 686 to 700 (ASSLASSSPPGSGRS) the composition is skewed to low complexity. Over residues 725–736 (SREEVRDDKTTI) the composition is skewed to basic and acidic residues. Threonine 761 bears the Phosphothreonine mark. Residues 762–771 (VSHEDIRDIR) are compositionally biased toward basic and acidic residues. Serine 763 bears the Phosphoserine mark. Polar residues predominate over residues 832–841 (VSETDNSSQD). Positions 847–871 (KLGGQAEKNRKLQKKHELLEEARRQ) form a coiled coil. SAM domains lie at 878-944 (WDGP…IMSL), 963-1027 (NHEW…LRRL), and 1051-1120 (WSND…LLVM). Residues 1021–1050 (IMCLRRLNYDRKELERKREESQSEIKDVLV) are a coiled coil. Serine 1133 is modified (phosphoserine). Threonine 1159 is modified (phosphothreonine). The disordered stretch occupies residues 1163–1202 (NFRVTSSMSSPSMQPKKMQMDGNVSGTQRLDSATVRTYSC). Residues 1168–1179 (SSMSSPSMQPKK) show a composition bias toward low complexity. Polar residues predominate over residues 1184–1202 (GNVSGTQRLDSATVRTYSC).

Belongs to the liprin family. Liprin-alpha subfamily. As to quaternary structure, homodimer. Interacts with PTPRF (via D2 domain). Part of a cortical microtubule stabilization complex (CMSC) composed of KANK1, PPFIA1, PPFIBP1, ERC1/ELKS, PHLDB2/LL5beta, CLASPs, KIF21A and possibly additional interactors; within CMSCs KANK1 and PHLDB2/LL5beta seem to be the core components for recruiting microtubule-binding proteins KIF21A and CLASPs, whereas PPFIA1, PPFIBP1 and ERC1/ELKS serve as scaffolds for protein clustering. In terms of tissue distribution, ubiquitous.

The protein localises to the cytoplasm. The protein resides in the cell cortex. Functionally, may regulate the disassembly of focal adhesions. May localize receptor-like tyrosine phosphatases type 2A at specific sites on the plasma membrane, possibly regulating their interaction with the extracellular environment and their association with substrates. The sequence is that of Liprin-alpha-1 (PPFIA1) from Homo sapiens (Human).